The sequence spans 111 residues: Universal stress protein B (111 aa).

The chain crosses the membrane as a helical span at residues 1-21 (MISTVSLFWALCVVCIVNMAR). At 22-89 (YFSSLRALLV…IRRCERVRRQ (68 aa)) the chain is on the cytoplasmic side. A helical membrane pass occupies residues 90–110 (FLLTSALCGLVVVSLIALMIW). Histidine 111 is a topological domain (periplasmic).

Belongs to the universal stress protein B family.

The protein localises to the cell inner membrane. In Salmonella choleraesuis (strain SC-B67), this protein is Universal stress protein B (uspB).